A 205-amino-acid chain; its full sequence is Tic20 family protein Ycf60 (205 aa).

Transmembrane regions (helical) follow at residues 5-25 (LFVNILFGTACIIIFGLVILI), 54-74 (AISCLIYFLPLLEGIAQFGIV), 102-122 (LIGFCIFITLYLIFVRGIIQI), 130-150 (IVQALLLYLLDSVIGTVLTSL), and 163-183 (LADTLLLITFMISIYAGTDAL).

It belongs to the Tic20 family.

The protein resides in the plastid. Its subcellular location is the chloroplast membrane. This chain is Tic20 family protein Ycf60 (ycf60), found in Cyanidium caldarium (Red alga).